A 1118-amino-acid polypeptide reads, in one-letter code: Ubiquitin carboxyl-terminal hydrolase 8 (1118 aa).

The MIT domain maps to 33-116 (TKSYVHSALK…ESLKLRYEEA (84 aa)). Basic and acidic residues-rich tracts occupy residues 120 to 146 (KKLE…REDG) and 158 to 177 (LDSK…KCET). Residues 120-177 (KKLEEKDRQEEAQRLQQKRQETGREDGGTLAKGSLENVLDSKDKTQKSNGEKNEKCET) are disordered. Ser160 is modified (phosphoserine). Residues 195–313 (KNISLIIMDA…WLLCYPQYTT (119 aa)) enclose the Rhodanese domain. A phosphoserine mark is found at Ser392 and Ser400. A disordered region spans residues 402–447 (KNVPQIDRTKKPAVKLPEEHRIKSESTNHEQQSPQSGKVIPDRSTK). An SH3-binding motif is present at residues 405–413 (PQIDRTKKP). Basic and acidic residues predominate over residues 417–429 (LPEEHRIKSESTN). At Ser452 the chain carries Phosphoserine. Basic and acidic residues predominate over residues 475–573 (KNKQEKELRE…AKKSVEDRGK (99 aa)). Disordered stretches follow at residues 475–648 (KNKQ…GRIV) and 679–746 (YPPE…ENKP). Thr577 is subject to Phosphothreonine. The span at 618–645 (TFREDTDDTERNKAQREPLTRARSEEMG) shows a compositional bias: basic and acidic residues. Residues 716–726 (SYSSPDITQAI) are compositionally biased toward polar residues. A phosphoserine mark is found at Ser718 and Ser719. The 333-residue stretch at 777–1109 (TGLRNLGNTC…AAYILFYTSL (333 aa)) folds into the USP domain. The Nucleophile role is filled by Cys786. Thr945 is subject to Phosphothreonine. The active-site Proton acceptor is the His1067.

It belongs to the peptidase C19 family. As to quaternary structure, forms a ternary complex with RNF128 and OTUB1. Interacts (via C-terminal UCH catalytic domain) with OTUB1 isoform 1. Interacts with STAM2 (via SH3 domain). Interacts with DNAJB3, EGFR, EPS15, RASGRF1, RNF41, YWHAE, YWHAG and YWHAZ. Interacts with NBR1, RASGRF1, RNF41 and IST1. Associates with the ESCRT-0 complex and with microtubules. Interacts with BIRC6/bruce and KIF23/MKLP1. (Microbial infection) Interacts with Zika virus non-structural protein 1. In terms of processing, phosphorylation of Ser-718 is essential for interaction with YWHAE and for cytosol localization. Undergoes dephosphorylation at Ser-718 in the M phase. Tyrosine-phosphorylated in its N-terminal half in an EGFR-dependent manner. Ubiquitinated. Inactive form is mostly monoubiquitinated, but polyubiquitination happens too. Ubiquitination is increased in EGF-stimulated cells. Ubiquitination of active form is undetectable, suggesting a possibility that USP8 deubiquitinates itself, thereby regulating its own function.

It is found in the cytoplasm. The protein resides in the nucleus. It localises to the endosome membrane. Its subcellular location is the cell membrane. The catalysed reaction is Thiol-dependent hydrolysis of ester, thioester, amide, peptide and isopeptide bonds formed by the C-terminal Gly of ubiquitin (a 76-residue protein attached to proteins as an intracellular targeting signal).. Functionally, hydrolase that can remove conjugated ubiquitin from proteins and therefore plays an important regulatory role at the level of protein turnover by preventing degradation. Converts both 'Lys-48' an 'Lys-63'-linked ubiquitin chains. Catalytic activity is enhanced in the M phase. Involved in cell proliferation. Required to enter into S phase in response to serum stimulation. May regulate T-cell anergy mediated by RNF128 via the formation of a complex containing RNF128 and OTUB1. Probably regulates the stability of STAM2 and RASGRF1. Regulates endosomal ubiquitin dynamics, cargo sorting, membrane traffic at early endosomes, and maintenance of ESCRT-0 stability. The level of protein ubiquitination on endosomes is essential for maintaining the morphology of the organelle. Deubiquitinates EPS15 and controls tyrosine kinase stability. Removes conjugated ubiquitin from EGFR thus regulating EGFR degradation and downstream MAPK signaling. Involved in acrosome biogenesis through interaction with the spermatid ESCRT-0 complex and microtubules. Deubiquitinates BIRC6/bruce and KIF23/MKLP1. Deubiquitinates BACE1 which inhibits BACE1 lysosomal degradation and modulates BACE-mediated APP cleavage and amyloid-beta formation. The protein is Ubiquitin carboxyl-terminal hydrolase 8 of Homo sapiens (Human).